Consider the following 603-residue polypeptide: Elongation factor 4 (603 aa).

Residues 2-184 (NHIRNFSIIA…AVIARVPPPK (183 aa)) enclose the tr-type G domain. GTP contacts are provided by residues 14 to 19 (DHGKST) and 131 to 134 (NKMD).

This sequence belongs to the TRAFAC class translation factor GTPase superfamily. Classic translation factor GTPase family. LepA subfamily.

It localises to the cell inner membrane. The enzyme catalyses GTP + H2O = GDP + phosphate + H(+). In terms of biological role, required for accurate and efficient protein synthesis under certain stress conditions. May act as a fidelity factor of the translation reaction, by catalyzing a one-codon backward translocation of tRNAs on improperly translocated ribosomes. Back-translocation proceeds from a post-translocation (POST) complex to a pre-translocation (PRE) complex, thus giving elongation factor G a second chance to translocate the tRNAs correctly. Binds to ribosomes in a GTP-dependent manner. This Polaromonas sp. (strain JS666 / ATCC BAA-500) protein is Elongation factor 4.